Reading from the N-terminus, the 489-residue chain is MTATQSPPEPAPDRVRLAGCPLAGTPDVGLTAQDATTALGVPTRRRASSGGIPVATSMWRDAQTVRTYGPAVAKALALRVAGKARSRLTGRHCRKFMQLTDFDPFDPAIAADPYPHYRELLAGERVQYNPKRDVYILSRYADVREAARNHDTLSSARGVTFSRGWLPFLPTSDPPAHTRMRKQLAPGMARGALETWRPMVDQLARELVGGLLTQTPADVVSTVAAPMPMRAITSVLGVDGPDEAAFCRLSNQAVRITDVALSASGLISLVQGFAGFRRLRALFTHRRDNGLLRECTVLGKLATHAEQGRLSDDELFFFAVLLLVAGYESTAHMISTLFLTLADYPDQLTLLAQQPDLIPSAIEEHLRFISPIQNICRTTRVDYSVGQAVIPAGSLVLLAWGAANRDPRQYEDPDVFRADRNPVGHLAFGSGIHLCPGTQLARMEGQAILREIVANIDRIEVVEPPTWTTNANLRGLTRLRVAVTPRVAP.

Heme is bound at residue C435.

The protein belongs to the cytochrome P450 family. It depends on heme as a cofactor.

The protein resides in the cytoplasm. The catalysed reaction is beta-dihydromenaquinone-9 + 2 reduced [2Fe-2S]-[ferredoxin] + O2 + 2 H(+) = omega-hydroxy-beta-dihydromenaquinone-9 + 2 oxidized [2Fe-2S]-[ferredoxin] + H2O. Its function is as follows. Involved in the biosynthesis of sulfomenaquinone (SMK, initially named S881 on the basis of its mass), which is localized in the outer envelope of M.bovis and negatively regulates its virulence. Catalyzes the hydroxylation of beta-dihydromenaquinone-9, leading to the formation of omega-hydroxy-beta-dihydromenaquinone-9. The sequence is that of Beta-dihydromenaquinone-9 omega-hydroxylase (cyp128) from Mycobacterium bovis (strain ATCC BAA-935 / AF2122/97).